Reading from the N-terminus, the 390-residue chain is MSDATPFRPPSEAEEALIKETRLPLTGWQQEVDQGLTYGLEAAASIKDRSIPTFSRGELPHYAGINTFMKAPYLEDVREVGKYDVAIVGVPHDSGTTYRPGTRFGPQGIRRISALYTPYNFEMGVDLREQISLCDVGDIFTIPANNEKSFDQISKGIAHIFSSGAFPIILGGDHSIGFPTVRGICRHLGDKKVGIIHFDRHVDTQETDLDERMHTCPWFHATNMANAPAKNLVQLGIGGWQVPRQGVKVCRERATNILTVTDITEMSLDAAADFAIARATDGTDCVWISFDIDCIDAGFVPGTGWPEPGGLLPREALYLLKRIIRETNVCGMEVVEVSPPYDISDMTSLMATRVICDTMAHLVVSGQLPRTEKPAYIHAEANMAVDEPWQ.

Ni(2+) contacts are provided by H174, D199, H201, D203, D291, and D293.

This sequence belongs to the arginase family. As to quaternary structure, homohexamer. Requires Ni(2+) as cofactor.

The protein resides in the cytoplasm. The catalysed reaction is guanidine + H2O = urea + NH4(+). Its activity is regulated as follows. Activation of GdmH depends on the presence of the accessory proteins GhaA (Sll1078) and GhaB (Sll1079), which load nickel into the active site. Hydrolase activity is slightly activated in the presence of GTP. It does not require ATP or NAD(P)H. Addition of Ca(2+), Mn(2+), Fe(2+) or Fe(3+) has no consistent effects, whereas addition of Co(2+), Cu(2+) or Zn(2+) inhibits the activity. Its function is as follows. Catalyzes the hydrolysis of guanidine into urea and ammonium. Is highly specific for free guanidine. At pH 8, also catalyzes the release of urea from methylguanidine but with significantly reduced specific activity compared with that for guanidine. Cannot hydrolyze guanidinoacetate, guanidinopropionate, guanidinobutyrate, agmatine, arginine or creatine. Required to use guanidine as the sole nitrogen source for growth. Overexpression of the gene accelerates guanidine degradation and promotes biomass growth. The protein is Guanidine hydrolase of Synechocystis sp. (strain ATCC 27184 / PCC 6803 / Kazusa).